The sequence spans 426 residues: Glutamate-1-semialdehyde 2,1-aminomutase (426 aa).

Lys-265 carries the post-translational modification N6-(pyridoxal phosphate)lysine.

This sequence belongs to the class-III pyridoxal-phosphate-dependent aminotransferase family. HemL subfamily. As to quaternary structure, homodimer. Pyridoxal 5'-phosphate serves as cofactor.

The protein localises to the cytoplasm. The catalysed reaction is (S)-4-amino-5-oxopentanoate = 5-aminolevulinate. It functions in the pathway porphyrin-containing compound metabolism; protoporphyrin-IX biosynthesis; 5-aminolevulinate from L-glutamyl-tRNA(Glu): step 2/2. In Klebsiella pneumoniae subsp. pneumoniae (strain ATCC 700721 / MGH 78578), this protein is Glutamate-1-semialdehyde 2,1-aminomutase.